Reading from the N-terminus, the 275-residue chain is Phosphonates import ATP-binding protein PhnC (275 aa).

Residues 2-246 form the ABC transporter domain; the sequence is LKIENLTKRY…ALTEIYGEEE (245 aa). ATP is bound at residue 35-42; the sequence is GPSGAGKS.

This sequence belongs to the ABC transporter superfamily. Phosphonates importer (TC 3.A.1.9.1) family. As to quaternary structure, the complex is composed of two ATP-binding proteins (PhnC), two transmembrane proteins (PhnE) and a solute-binding protein (PhnD).

It is found in the cell inner membrane. It catalyses the reaction phosphonate(out) + ATP + H2O = phosphonate(in) + ADP + phosphate + H(+). Functionally, part of the ABC transporter complex PhnCDE involved in phosphonates import. Responsible for energy coupling to the transport system. This Wolinella succinogenes (strain ATCC 29543 / DSM 1740 / CCUG 13145 / JCM 31913 / LMG 7466 / NCTC 11488 / FDC 602W) (Vibrio succinogenes) protein is Phosphonates import ATP-binding protein PhnC.